The primary structure comprises 611 residues: MPKLRSATSTQGRNMAGARALWRATGMKENDFGKPIIAVVNSFTQFVPGHVHLKDMGQLVAREIEKAGGVAKEFNTIAVDDGIAMGHGGMLYSLPSRDLIADSVEYMVNAHCADAMVCISNCDKITPGMLMAALRLNIPCVFVSGGPMEAGKTKLSDKIIKLDLVDAMIQGANPNVSDEDSAQIERSACPTCGSCSGMFTANSMNCLTEALGLSLPGNGSCLATHADRKQLFLDAGKQVVELCKRYYEQEDDSVLPRSIANKKAFENAMSLDIAMGGSTNTVLHLLAAAQEAEVDFTMADIDRLSRQVPCLSKVAPNTQKYHMEDVHRAGGIMAILGELDRANLLHNDTRTVLGMSLAEQIAKYDIVLTKDEAVHKFFRAGPAGIRTTEAFSQDCRWDTVDDDRENGCIRSKTFAYSQDGGLAMLSGNLAMDGCIVKTAGVDESILKFTGDAIVFESQEDAVAGILGGKVQAGHVVVIRYEGPKGGPGMQEMLYPTSYLKSMGLGKACALLTDGRFSGGTSGLSIGHCSPEAAAGGLIGLVKDGDKIEIDIPNRSIQLCVAEEELAQRRAEQDKLGWQPVNRQREVSFALKVYGHFATSADKGAVRDKTKI.

D81 serves as a coordination point for Mg(2+). C122 is a binding site for [2Fe-2S] cluster. The Mg(2+) site is built by D123 and K124. K124 is subject to N6-carboxylysine. C195 is a [2Fe-2S] cluster binding site. E491 contacts Mg(2+). S517 serves as the catalytic Proton acceptor.

This sequence belongs to the IlvD/Edd family. In terms of assembly, homodimer. It depends on [2Fe-2S] cluster as a cofactor. Mg(2+) serves as cofactor.

The catalysed reaction is (2R)-2,3-dihydroxy-3-methylbutanoate = 3-methyl-2-oxobutanoate + H2O. It carries out the reaction (2R,3R)-2,3-dihydroxy-3-methylpentanoate = (S)-3-methyl-2-oxopentanoate + H2O. It participates in amino-acid biosynthesis; L-isoleucine biosynthesis; L-isoleucine from 2-oxobutanoate: step 3/4. It functions in the pathway amino-acid biosynthesis; L-valine biosynthesis; L-valine from pyruvate: step 3/4. Its function is as follows. Functions in the biosynthesis of branched-chain amino acids. Catalyzes the dehydration of (2R,3R)-2,3-dihydroxy-3-methylpentanoate (2,3-dihydroxy-3-methylvalerate) into 2-oxo-3-methylpentanoate (2-oxo-3-methylvalerate) and of (2R)-2,3-dihydroxy-3-methylbutanoate (2,3-dihydroxyisovalerate) into 2-oxo-3-methylbutanoate (2-oxoisovalerate), the penultimate precursor to L-isoleucine and L-valine, respectively. The chain is Dihydroxy-acid dehydratase from Pasteurella multocida (strain Pm70).